The chain runs to 171 residues: PBAN-type neuropeptides (171 aa).

An N-terminal signal peptide occupies residues 1–22 (MFRLYFFFNVICIFLAIRSAIG). A propeptide spanning residues 23–47 (GEVPDATEQKINNFLASGKDSEDLS) is cleaved from the precursor. Leucine 59 is subject to Leucine amide. Positions 63–111 (TIASELHDEMMDEIDDNPLYYSGESPQRVASEIAQGTPYVVLLLTGRVL) are excised as a propeptide. The interval 120–151 (HSTTPRLGRRDASSSNENNSRPPFAPRLGRNL) is disordered. Leucine amide is present on residues leucine 126, leucine 147, and leucine 157. The propeptide occupies 160–171 (SFGAPVVDNFAY).

Belongs to the pyrokinin family.

Its subcellular location is the secreted. A hormone that controls sex pheromone production in females and pheromone responsiveness in male. Also mediates visceral muscle contractile activity (myotropic activity). In Aedes aegypti (Yellowfever mosquito), this protein is PBAN-type neuropeptides.